Reading from the N-terminus, the 342-residue chain is Succinylglutamate desuccinylase (342 aa).

Residues H64, E67, and H159 each coordinate Zn(2+). The active site involves E222.

The protein belongs to the AspA/AstE family. Succinylglutamate desuccinylase subfamily. It depends on Zn(2+) as a cofactor.

The catalysed reaction is N-succinyl-L-glutamate + H2O = L-glutamate + succinate. It participates in amino-acid degradation; L-arginine degradation via AST pathway; L-glutamate and succinate from L-arginine: step 5/5. Functionally, transforms N(2)-succinylglutamate into succinate and glutamate. In Burkholderia orbicola (strain MC0-3), this protein is Succinylglutamate desuccinylase.